We begin with the raw amino-acid sequence, 109 residues long: Spermidine export protein MdtI (109 aa).

4 helical membrane-spanning segments follow: residues 6 to 26 (WVHAAWLALAIVLEIVANVFL), 36 to 56 (IFGLLSQAAVLAAFSALSQAV), 64 to 84 (AYALWGGFGIAATLAAGWILF), and 88 to 108 (LNRKGWIGLVLLLAGMIMVKL).

Belongs to the drug/metabolite transporter (DMT) superfamily. Small multidrug resistance (SMR) (TC 2.A.7.1) family. MdtI subfamily. In terms of assembly, forms a complex with MdtJ.

The protein resides in the cell inner membrane. Catalyzes the excretion of spermidine. In Shigella dysenteriae serotype 1 (strain Sd197), this protein is Spermidine export protein MdtI.